The chain runs to 156 residues: ATP synthase subunit b (156 aa).

The chain crosses the membrane as a helical span at residues 5–25 (LTLIGQAIAFAFFVAFCMKFV).

Belongs to the ATPase B chain family. In terms of assembly, F-type ATPases have 2 components, F(1) - the catalytic core - and F(0) - the membrane proton channel. F(1) has five subunits: alpha(3), beta(3), gamma(1), delta(1), epsilon(1). F(0) has three main subunits: a(1), b(2) and c(10-14). The alpha and beta chains form an alternating ring which encloses part of the gamma chain. F(1) is attached to F(0) by a central stalk formed by the gamma and epsilon chains, while a peripheral stalk is formed by the delta and b chains.

Its subcellular location is the cell inner membrane. F(1)F(0) ATP synthase produces ATP from ADP in the presence of a proton or sodium gradient. F-type ATPases consist of two structural domains, F(1) containing the extramembraneous catalytic core and F(0) containing the membrane proton channel, linked together by a central stalk and a peripheral stalk. During catalysis, ATP synthesis in the catalytic domain of F(1) is coupled via a rotary mechanism of the central stalk subunits to proton translocation. Its function is as follows. Component of the F(0) channel, it forms part of the peripheral stalk, linking F(1) to F(0). The protein is ATP synthase subunit b of Acinetobacter baumannii (strain SDF).